A 791-amino-acid polypeptide reads, in one-letter code: Nuclear cap-binding protein subunit 1-B (791 aa).

A disordered region spans residues 1–24 (MSRRRHSDENDGGQPHKRRRTSEP). An MIF4G domain is found at 28-240 (EDRLESLICR…CLWAQVQKLK (213 aa)). The stretch at 641–714 (LHSTIRKMNK…SEQKNLFLVI (74 aa)) forms a coiled coil. The disordered stretch occupies residues 664-687 (QRLAKQHKHRDSDDNDEDSGRKDG).

Belongs to the NCBP1 family. Component of the nuclear cap-binding complex (CBC), a heterodimer composed of ncbp1/cbp80 and ncbp2/cbp20 that interacts with m7GpppG-capped RNA. Component of an alternative nuclear cap-binding complex (CBC) composed of ncbp1/cbp80 and ncbp3.

It is found in the nucleus. Its subcellular location is the cytoplasm. Functionally, component of the cap-binding complex (CBC), which binds cotranscriptionally to the 5'-cap of pre-mRNAs and is involved in various processes such as pre-mRNA splicing, translation regulation, nonsense-mediated mRNA decay, RNA-mediated gene silencing (RNAi) by microRNAs (miRNAs) and mRNA export. The CBC complex is involved in mRNA export from the nucleus, leading to the recruitment of the mRNA export machinery to the 5'-end of mRNA and to mRNA export in a 5' to 3' direction through the nuclear pore. The CBC complex is also involved in mediating U snRNA and intronless mRNAs export from the nucleus. The CBC complex is essential for a pioneer round of mRNA translation, before steady state translation when the CBC complex is replaced by cytoplasmic cap-binding protein eIF4E. The pioneer round of mRNA translation mediated by the CBC complex plays a central role in nonsense-mediated mRNA decay (NMD), NMD only taking place in mRNAs bound to the CBC complex, but not on eIF4E-bound mRNAs. The CBC complex enhances NMD in mRNAs containing at least one exon-junction complex (EJC), promoting the interaction between UPF1 and UPF2. The CBC complex is also involved in 'failsafe' NMD, which is independent of the EJC complex, while it does not participate in Staufen-mediated mRNA decay (SMD). During cell proliferation, the CBC complex is also involved in microRNAs (miRNAs) biogenesis via its interaction with SRRT/ARS2 and is required for miRNA-mediated RNA interference. The CBC complex also acts as a negative regulator of parn, thereby acting as an inhibitor of mRNA deadenylation. In the CBC complex, NCBP1/CBP80 does not bind directly capped RNAs (m7GpppG-capped RNA) but is required to stabilize the movement of the N-terminal loop of NCBP2/CBP20 and lock the CBC into a high affinity cap-binding state with the cap structure. Associates with NCBP3 to form an alternative cap-binding complex (CBC) which plays a key role in mRNA export. The conventional CBC with NCBP2 binds both small nuclear RNA (snRNA) and messenger (mRNA) and is involved in their export from the nucleus whereas the alternative CBC with NCBP3 does not bind snRNA and associates only with mRNA thereby playing a role only in mRNA export. The sequence is that of Nuclear cap-binding protein subunit 1-B (ncbp1-b) from Xenopus laevis (African clawed frog).